The primary structure comprises 367 residues: Anthranilate phosphoribosyltransferase (367 aa).

A compositionally biased stretch (low complexity) spans 1–21 (MALSSESSAASAARRPSGGPA). The tract at residues 1-24 (MALSSESSAASAARRPSGGPATSW) is disordered. 5-phospho-alpha-D-ribose 1-diphosphate-binding positions include Gly-104, 107-108 (GD), Thr-112, 114-117 (NLST), 132-140 (KHGNRAASS), and Gly-144. Residue Gly-104 coordinates anthranilate. A Mg(2+)-binding site is contributed by Ser-116. Asn-135 contributes to the anthranilate binding site. Arg-190 contacts anthranilate. Mg(2+) is bound by residues Asp-248 and Glu-249.

It belongs to the anthranilate phosphoribosyltransferase family. Homodimer. Mg(2+) is required as a cofactor.

The catalysed reaction is N-(5-phospho-beta-D-ribosyl)anthranilate + diphosphate = 5-phospho-alpha-D-ribose 1-diphosphate + anthranilate. Its pathway is amino-acid biosynthesis; L-tryptophan biosynthesis; L-tryptophan from chorismate: step 2/5. Catalyzes the transfer of the phosphoribosyl group of 5-phosphorylribose-1-pyrophosphate (PRPP) to anthranilate to yield N-(5'-phosphoribosyl)-anthranilate (PRA). In Mycolicibacterium paratuberculosis (strain ATCC BAA-968 / K-10) (Mycobacterium paratuberculosis), this protein is Anthranilate phosphoribosyltransferase.